Reading from the N-terminus, the 123-residue chain is MPAKAQAAGKKGSKKAKAPKPSGDKKRRRKRKESYGIYIYKVLKQVHPDTGISSRAMSIMNSFVNDVFERIAAEASRLAHYNKKSTITSREVQTAVRLLLPGELAKHAVSEGTKAVTKYTTSK.

Positions 1-10 are enriched in low complexity; it reads MPAKAQAAGK. Residues 1–32 form a disordered region; sequence MPAKAQAAGKKGSKKAKAPKPSGDKKRRRKRK. O-linked (GlcNAc) serine glycosylation occurs at serine 110. A Glycyl lysine isopeptide (Lys-Gly) (interchain with G-Cter in ubiquitin) cross-link involves residue lysine 118.

It belongs to the histone H2B family. The nucleosome is a histone octamer containing two molecules each of H2A, H2B, H3 and H4 assembled in one H3-H4 heterotetramer and two H2A-H2B heterodimers. The octamer wraps approximately 147 bp of DNA. In terms of processing, monoubiquitination of Lys-118 gives a specific tag for epigenetic transcriptional activation and is also prerequisite for histone H3 'Lys-4' and 'Lys-79' methylation. Post-translationally, glcNAcylation at Ser-110 promotes monoubiquitination of Lys-118. It fluctuates in response to extracellular glucose, and associates with transcribed genes.

It is found in the nucleus. Its subcellular location is the chromosome. In terms of biological role, core component of nucleosome. Nucleosomes wrap and compact DNA into chromatin, limiting DNA accessibility to the cellular machineries which require DNA as a template. Histones thereby play a central role in transcription regulation, DNA repair, DNA replication and chromosomal stability. DNA accessibility is regulated via a complex set of post-translational modifications of histones, also called histone code, and nucleosome remodeling. This Strongylocentrotus purpuratus (Purple sea urchin) protein is Late histone H2B.L3.